The primary structure comprises 253 residues: Sulfate transporter CysZ (253 aa).

The next 4 helical transmembrane spans lie at 31-51 (FVIL…WWLF), 75-95 (LLWP…FSTI), 151-171 (IVLL…PVLW), and 222-242 (IPLL…AMWV).

Belongs to the CysZ family.

It localises to the cell inner membrane. High affinity, high specificity proton-dependent sulfate transporter, which mediates sulfate uptake. Provides the sulfur source for the cysteine synthesis pathway. This Shigella dysenteriae serotype 1 (strain Sd197) protein is Sulfate transporter CysZ.